The following is a 364-amino-acid chain: MPSPTHLLNNFESSSSQGPPSYCLICCEVADGHHFGAAACRACAAFFRRTVQLNKVHDCPKNGQCFILSNVRNMCRACRYEKCLEVGMQRSSVQQKRDQLGRRDGLPTNREEPVLDTMRRAYEKLLVVRKKVHNRQENQLPRAISFNELQVVYQNEMTVIYQFLCEAFPEYSELLPDTKRSLFKNFFLPFTLLESSYYGYLTKQENVMLIPSGDYVDLAHLESYFNNNHHTFSQKDTISMFAQQFRMLHTSITVPLSAENVDVNEFLALAAIILWESDLEVEADRKNVQEEAVKIKSAIIKDLLFHYQSINVYADVAMRLGAVLSILPSIQRASHRFHEYMEIKNLLNLYALPKNLYDMFSPTS.

The nuclear receptor DNA-binding region spans 20-95 (PSYCLICCEV…VGMQRSSVQQ (76 aa)). 2 NR C4-type zinc fingers span residues 23 to 43 (CLICCEVADGHHFGAAACRAC) and 59 to 83 (CPKNGQCFILSNVRNMCRACRYEKC). Residues 110–363 (REEPVLDTMR…KNLYDMFSPT (254 aa)) enclose the NR LBD domain.

It belongs to the nuclear hormone receptor family.

The protein resides in the nucleus. In terms of biological role, orphan nuclear receptor. The protein is Nuclear hormone receptor family member nhr-53 (nhr-53) of Caenorhabditis elegans.